The following is a 361-amino-acid chain: Transmembrane protein 116 (361 aa).

The next 7 helical transmembrane spans lie at 29-49 (WIQM…ILYA), 64-84 (FLLS…GLLF), 103-123 (TLYM…YTGL), 147-167 (LGPV…FVAG), 210-230 (CMAI…IFMG), 261-281 (MVLY…LATM), and 295-315 (VALY…NCLV).

It localises to the membrane. The chain is Transmembrane protein 116 (tmem116) from Danio rerio (Zebrafish).